The sequence spans 269 residues: Auxin-responsive protein IAA26 (269 aa).

Basic and acidic residues predominate over residues 25-40 (YQEDKNNTDQEKKLEL). Disordered stretches follow at residues 25–55 (YQED…HSAI) and 76–146 (CFNG…KQVE). The EAR-like (transcriptional repression) signature appears at 38 to 42 (LELRL). Composition is skewed to polar residues over residues 80–93 (NHFS…SVPH) and 117–136 (LAST…GQIN). The span at 137-146 (KSDDGEKQVE) shows a compositional bias: basic and acidic residues. A PB1 domain is found at 151-250 (GMFVKINMDG…SVKRLRVIKS (100 aa)).

The protein belongs to the Aux/IAA family. Homodimers and heterodimers. Interacts with phytochrome A. Interacts with TPL.

It is found in the nucleus. In terms of biological role, aux/IAA proteins are short-lived transcriptional factors that function as repressors of early auxin response genes at low auxin concentrations. Repression is thought to result from the interaction with auxin response factors (ARFs), proteins that bind to the auxin-responsive promoter element (AuxRE). Formation of heterodimers with ARF proteins may alter their ability to modulate early auxin response genes expression. This Arabidopsis thaliana (Mouse-ear cress) protein is Auxin-responsive protein IAA26 (IAA26).